The primary structure comprises 250 residues: UPF0193 protein EVG1 homolog (250 aa).

The tract at residues 86-110 (ESLRNGEPLPLPEPPRPNTNNDPDK) is disordered.

This sequence belongs to the UPF0193 (EVG1) family.

This is UPF0193 protein EVG1 homolog from Drosophila melanogaster (Fruit fly).